A 574-amino-acid polypeptide reads, in one-letter code: Pentatricopeptide repeat-containing protein At5g25630 (574 aa).

Residues 1–21 (MEDVNQEKKKVPPMSEPERST) show a composition bias toward basic and acidic residues. Positions 1–25 (MEDVNQEKKKVPPMSEPERSTPIKT) are disordered. 12 PPR repeats span residues 44–78 (TVRS…GHRP), 79–113 (SLIS…GTKL), 114–148 (DSIF…GLNP), 149–183 (TTST…GNVD), 187–221 (NIRT…GVRP), 222–258 (DTVT…KAKP), 259–293 (NGRT…RVEA), 294–328 (NLVV…NVKA), 329–363 (DVIT…GVKP), 364–394 (DAHA…LIVE), 398–432 (NVVI…GVSP), and 433–467 (NIKT…GVKP).

Belongs to the PPR family. P subfamily.

This Arabidopsis thaliana (Mouse-ear cress) protein is Pentatricopeptide repeat-containing protein At5g25630.